A 328-amino-acid chain; its full sequence is Glycerol-3-phosphate dehydrogenase [NAD(P)+] (328 aa).

Tryptophan 11, arginine 30, and lysine 103 together coordinate NADPH. Residues lysine 103, glycine 132, and serine 134 each contribute to the sn-glycerol 3-phosphate site. Alanine 136 is a binding site for NADPH. Positions 187, 240, 250, 251, and 252 each coordinate sn-glycerol 3-phosphate. Lysine 187 acts as the Proton acceptor in catalysis. Arginine 251 is an NADPH binding site. NADPH-binding residues include valine 275 and glutamate 277.

It belongs to the NAD-dependent glycerol-3-phosphate dehydrogenase family.

It localises to the cytoplasm. The catalysed reaction is sn-glycerol 3-phosphate + NAD(+) = dihydroxyacetone phosphate + NADH + H(+). It catalyses the reaction sn-glycerol 3-phosphate + NADP(+) = dihydroxyacetone phosphate + NADPH + H(+). It participates in membrane lipid metabolism; glycerophospholipid metabolism. Its function is as follows. Catalyzes the reduction of the glycolytic intermediate dihydroxyacetone phosphate (DHAP) to sn-glycerol 3-phosphate (G3P), the key precursor for phospholipid synthesis. The chain is Glycerol-3-phosphate dehydrogenase [NAD(P)+] from Thiobacillus denitrificans (strain ATCC 25259 / T1).